A 563-amino-acid polypeptide reads, in one-letter code: Glutamate--tRNA ligase (563 aa).

A disordered region spans residues 61-94 (PEEQQKEVESLGGLEQHTKKEEKPKGLPELKNTE). The segment covering 76–94 (QHTKKEEKPKGLPELKNTE) has biased composition (basic and acidic residues). A 'HIGH' region motif is present at residues 104–114 (PNPSGPLHIGH).

This sequence belongs to the class-I aminoacyl-tRNA synthetase family. Glutamate--tRNA ligase type 2 subfamily.

The protein localises to the cytoplasm. The enzyme catalyses tRNA(Glu) + L-glutamate + ATP = L-glutamyl-tRNA(Glu) + AMP + diphosphate. Its function is as follows. Catalyzes the attachment of glutamate to tRNA(Glu) in a two-step reaction: glutamate is first activated by ATP to form Glu-AMP and then transferred to the acceptor end of tRNA(Glu). In Methanosphaera stadtmanae (strain ATCC 43021 / DSM 3091 / JCM 11832 / MCB-3), this protein is Glutamate--tRNA ligase.